Here is a 777-residue protein sequence, read N- to C-terminus: 1,4-alpha-glucan branching enzyme GlgB (777 aa).

The Nucleophile role is filled by D408. The Proton donor role is filled by E461.

The protein belongs to the glycosyl hydrolase 13 family. GlgB subfamily. In terms of assembly, monomer.

It carries out the reaction Transfers a segment of a (1-&gt;4)-alpha-D-glucan chain to a primary hydroxy group in a similar glucan chain.. It participates in glycan biosynthesis; glycogen biosynthesis. Functionally, catalyzes the formation of the alpha-1,6-glucosidic linkages in glycogen by scission of a 1,4-alpha-linked oligosaccharide from growing alpha-1,4-glucan chains and the subsequent attachment of the oligosaccharide to the alpha-1,6 position. This chain is 1,4-alpha-glucan branching enzyme GlgB, found in Actinobacillus pleuropneumoniae serotype 5b (strain L20).